Consider the following 115-residue polypeptide: NADH-ubiquinone oxidoreductase chain 3 (115 aa).

3 consecutive transmembrane segments (helical) span residues 4-24 (ALTL…AFWL), 55-75 (FFLV…LLPL), and 84-104 (LTTM…SLAY).

It belongs to the complex I subunit 3 family. In terms of assembly, core subunit of respiratory chain NADH dehydrogenase (Complex I) which is composed of 45 different subunits. Interacts with TMEM186. Interacts with TMEM242.

It localises to the mitochondrion inner membrane. The enzyme catalyses a ubiquinone + NADH + 5 H(+)(in) = a ubiquinol + NAD(+) + 4 H(+)(out). Functionally, core subunit of the mitochondrial membrane respiratory chain NADH dehydrogenase (Complex I) which catalyzes electron transfer from NADH through the respiratory chain, using ubiquinone as an electron acceptor. Essential for the catalytic activity of complex I. The sequence is that of NADH-ubiquinone oxidoreductase chain 3 from Halichoerus grypus (Gray seal).